Reading from the N-terminus, the 128-residue chain is MLRFVPRRLAIGAYTLFMMEQKNNPKLKGLKIADRGKMTSKLYKALNPNDKAALEKRAAAHPGFKRKEKEPKELKAAKAAKTSTPRAPSEYAKFVQANIGRFEKLPHLDRMKAVAKLWKQQQMRTGKP.

The propeptide occupies Met1–Ala10. The segment at Ala60–Ala87 is disordered. Basic and acidic residues predominate over residues Lys65–Ala76.

This sequence belongs to the KAP family. As to quaternary structure, associates with the kinetoplast DNA network.

The protein localises to the mitochondrion matrix. Its subcellular location is the kinetoplast. Histone H1-like DNA-binding protein involved in the organization and segregation of kinetoplast DNA (kDNA). The mitochondrial DNA of kinetoplastid protozoa consists of about 5,000 minicircles and 20 to 30 maxicircles. These circular DNAs are held together by catenation into a highly organized compact disk structure referred to as a kinetoplast DNA (kDNA) network. Binds preferentially to a specific fragment of minicircle DNA and is able to compact kDNA networks through DNA charge neutralization and condensation. The chain is Kinetoplast-associated protein 4 (KAP4) from Crithidia fasciculata.